The sequence spans 240 residues: 1-(5-phosphoribosyl)-5-[(5-phosphoribosylamino)methylideneamino] imidazole-4-carboxamide isomerase 2 (240 aa).

Residue Asp8 is the Proton acceptor of the active site. Asp129 serves as the catalytic Proton donor.

Belongs to the HisA/HisF family.

The protein localises to the cytoplasm. It carries out the reaction 1-(5-phospho-beta-D-ribosyl)-5-[(5-phospho-beta-D-ribosylamino)methylideneamino]imidazole-4-carboxamide = 5-[(5-phospho-1-deoxy-D-ribulos-1-ylimino)methylamino]-1-(5-phospho-beta-D-ribosyl)imidazole-4-carboxamide. It participates in amino-acid biosynthesis; L-histidine biosynthesis; L-histidine from 5-phospho-alpha-D-ribose 1-diphosphate: step 4/9. This chain is 1-(5-phosphoribosyl)-5-[(5-phosphoribosylamino)methylideneamino] imidazole-4-carboxamide isomerase 2, found in Ruegeria sp. (strain TM1040) (Silicibacter sp.).